Consider the following 91-residue polypeptide: Histone H1, sperm (91 aa).

A disordered region spans residues 1 to 25 (PGSPQKRAASPRKSPRKGSPKKSPM). A compositionally biased stretch (basic residues) spans 9 to 20 (ASPRKSPRKGSP). The region spanning 18–91 (GSPKKSPMIR…TGATGRFRVG (74 aa)) is the H15 domain.

It belongs to the histone H1/H5 family.

It is found in the nucleus. It localises to the chromosome. In terms of biological role, histones H1 are necessary for the condensation of nucleosome chains into higher-order structures. This is Histone H1, sperm from Sphaerechinus granularis (Purple sea urchin).